Consider the following 381-residue polypeptide: Heme A synthase (381 aa).

Residues 1–23 (MARRPVFQEVTETTPPGTTPSGG) are disordered. A compositionally biased stretch (low complexity) spans 11–23 (TETTPPGTTPSGG). Helical transmembrane passes span 34 to 54 (GAIRLWLVVLFVMVAAMIALG), 120 to 140 (RLLGRLVGLVWAAGFVFFLAT), 151 to 171 (LLLLGALGGAQGAIGWWMVHS), 185 to 205 (LATHLGLAFAILGLIAWYVLA), 228 to 248 (TTGLMHLAFVQILLGALVAGI), 285 to 305 (LVQFIHRMTGYLLAVFAVVVF), 319 to 339 (AYVAMLVALAVQVALGIMNVL), and 342 to 362 (SPLPLALAHQIGAVALFTLIL). Heme is bound at residue His-290. His-350 is a heme binding site.

This sequence belongs to the COX15/CtaA family. Type 2 subfamily. As to quaternary structure, interacts with CtaB. It depends on heme b as a cofactor.

It is found in the cell membrane. The enzyme catalyses Fe(II)-heme o + 2 A + H2O = Fe(II)-heme a + 2 AH2. Its pathway is porphyrin-containing compound metabolism; heme A biosynthesis; heme A from heme O: step 1/1. Functionally, catalyzes the conversion of heme O to heme A by two successive hydroxylations of the methyl group at C8. The first hydroxylation forms heme I, the second hydroxylation results in an unstable dihydroxymethyl group, which spontaneously dehydrates, resulting in the formyl group of heme A. The protein is Heme A synthase of Paracoccus denitrificans (strain Pd 1222).